The primary structure comprises 704 residues: Elongation factor G 1 (704 aa).

Positions 8–291 (ERYRNIGISA…AVIDYLPSPA (284 aa)) constitute a tr-type G domain. GTP-binding positions include 17–24 (AHIDAGKT), 88–92 (DTPGH), and 142–145 (NKMD).

This sequence belongs to the TRAFAC class translation factor GTPase superfamily. Classic translation factor GTPase family. EF-G/EF-2 subfamily.

The protein resides in the cytoplasm. Catalyzes the GTP-dependent ribosomal translocation step during translation elongation. During this step, the ribosome changes from the pre-translocational (PRE) to the post-translocational (POST) state as the newly formed A-site-bound peptidyl-tRNA and P-site-bound deacylated tRNA move to the P and E sites, respectively. Catalyzes the coordinated movement of the two tRNA molecules, the mRNA and conformational changes in the ribosome. In Burkholderia mallei (strain ATCC 23344), this protein is Elongation factor G 1.